A 253-amino-acid polypeptide reads, in one-letter code: 3-deoxy-manno-octulosonate cytidylyltransferase (253 aa).

This sequence belongs to the KdsB family.

It is found in the cytoplasm. It catalyses the reaction 3-deoxy-alpha-D-manno-oct-2-ulosonate + CTP = CMP-3-deoxy-beta-D-manno-octulosonate + diphosphate. The protein operates within nucleotide-sugar biosynthesis; CMP-3-deoxy-D-manno-octulosonate biosynthesis; CMP-3-deoxy-D-manno-octulosonate from 3-deoxy-D-manno-octulosonate and CTP: step 1/1. It functions in the pathway bacterial outer membrane biogenesis; lipopolysaccharide biosynthesis. Functionally, activates KDO (a required 8-carbon sugar) for incorporation into bacterial lipopolysaccharide in Gram-negative bacteria. The chain is 3-deoxy-manno-octulosonate cytidylyltransferase from Geotalea daltonii (strain DSM 22248 / JCM 15807 / FRC-32) (Geobacter daltonii).